Here is a 710-residue protein sequence, read N- to C-terminus: Amyloid beta precursor protein binding family B member 1 (710 aa).

A compositionally biased stretch (polar residues) spans 1–15 (MSVPSSLSQSAINAN). Disordered regions lie at residues 1 to 24 (MSVPSSLSQSAINANSHGGPALSL), 131 to 254 (GLRG…TDSD), 276 to 299 (GTTQWEPPGRASPSQGSSPQEESQ), and 340 to 365 (TFPAQSLSPEPLPQEEEKLPPRNTNP). Acidic residues predominate over residues 145 to 173 (GPDEGEEKAAGEAEEEEEDDDDEEEEEDL). N6-acetyllysine is present on Lys204. Polar residues predominate over residues 223-234 (SWATLSQGSPSY). A WW domain is found at 253 to 285 (SDLPAGWMRVQDTSGTYYWHIPTGTTQWEPPGR). The span at 287-299 (SPSQGSSPQEESQ) shows a compositional bias: low complexity. One can recognise a PID 1 domain in the interval 370–509 (FAVRSLGWVE…SKIMAERRNA (140 aa)). Ser459 is subject to Phosphoserine; by PKC. At Ser517 the chain carries Phosphoserine. Residues 542 to 699 (KFQVYYLGNV…RRGVQSLWGS (158 aa)) form the PID 2 domain. At Tyr547 the chain carries Phosphotyrosine; by ABL1. Ser610 carries the phosphoserine; by SGK1 modification. Lys701 is subject to N6-acetyllysine.

As to quaternary structure, component of a complex, at least composed of APBB1, RASD1/DEXRAS1 and APP. Interacts (via PID domain 2) with APP (with the intracellular domain of the amyloid-beta precursor protein). Interacts (via PID domain 2) with RASD1/DEXRAS1; impairs the transcription activation activity. Interacts (via PID domain 1) with KAT5/TIP60. Interacts (via the WW domain) with the proline-rich region of APBB1IP. Interacts with TSHZ1 and TSHZ2. Interacts (via the WW domain) with histone H2AX (when phosphorylated on 'Tyr-142') and the proline-rich region of ENAH. Interacts with MAPK8. Interacts (via PID domain 1) with TSHZ3 (via homeobox domain). Interacts with SET. Found in a trimeric complex with HDAC1 and TSHZ3; the interaction between HDAC1 and APBB1 is mediated by TSHZ3. Interacts (via WWW domain) with NEK6. Interacts (via WWW domain) with ABL1. Interacts with RNF157. Interacts with ARF6. In terms of processing, phosphorylation at Ser-610 by SGK1 promotes its localization to the nucleus. Phosphorylated following nuclear translocation. Phosphorylation at Tyr-547 by ABL1 enhances transcriptional activation activity and reduces the affinity for RASD1/DEXRAS1. Phosphorylated at Ser-459 by PKC upon insulin activation. Post-translationally, acetylation at Lys-204 and Lys-701 by KAT5 promotes its transcription activator activity. Polyubiquitination by RNF157 leads to degradation by the proteasome. In terms of tissue distribution, highly expressed in brain; strongly reduced in post-mortem elderly subjects with Alzheimer disease. As to expression, expressed preferentially in the brain.

It localises to the cell membrane. It is found in the cytoplasm. The protein localises to the nucleus. Its subcellular location is the cell projection. The protein resides in the growth cone. It localises to the nucleus speckle. Transcription coregulator that can have both coactivator and corepressor functions. Adapter protein that forms a transcriptionally active complex with the gamma-secretase-derived amyloid precursor protein (APP) intracellular domain. Plays a central role in the response to DNA damage by translocating to the nucleus and inducing apoptosis. May act by specifically recognizing and binding histone H2AX phosphorylated on 'Tyr-142' (H2AXY142ph) at double-strand breaks (DSBs), recruiting other pro-apoptosis factors such as MAPK8/JNK1. Required for histone H4 acetylation at double-strand breaks (DSBs). Its ability to specifically bind modified histones and chromatin modifying enzymes such as KAT5/TIP60, probably explains its transcription activation activity. Functions in association with TSHZ3, SET and HDAC factors as a transcriptional repressor, that inhibits the expression of CASP4. Associates with chromatin in a region surrounding the CASP4 transcriptional start site(s). Involved in hippocampal neurite branching and neuromuscular junction formation, as a result plays a role in spatial memory functioning. Plays a role in the maintenance of lens transparency. May play a role in muscle cell strength. Acts as a molecular adapter that functions in neurite outgrowth by activating the RAC1-ARF6 axis upon insulin treatment. The polypeptide is Amyloid beta precursor protein binding family B member 1 (Homo sapiens (Human)).